A 103-amino-acid polypeptide reads, in one-letter code: N(4)-acetylcytidine amidohydrolase (103 aa).

The region spanning 6-100 (ITFFQRFQED…AEDRFYVIEF (95 aa)) is the ASCH domain. Lysine 21 serves as the catalytic Proton acceptor. The active-site Nucleophile is threonine 24. Glutamate 74 (proton donor) is an active-site residue.

Belongs to the N(4)-acetylcytidine amidohydrolase family.

The enzyme catalyses N(4)-acetylcytidine + H2O = cytidine + acetate + H(+). The catalysed reaction is N(4)-acetyl-2'-deoxycytidine + H2O = 2'-deoxycytidine + acetate + H(+). It catalyses the reaction N(4)-acetylcytosine + H2O = cytosine + acetate + H(+). In terms of biological role, catalyzes the hydrolysis of N(4)-acetylcytidine (ac4C). The polypeptide is N(4)-acetylcytidine amidohydrolase (Klebsiella pneumoniae (strain 342)).